Reading from the N-terminus, the 457-residue chain is tRNA-2-methylthio-N(6)-dimethylallyladenosine synthase (457 aa).

Residues 3 to 120 enclose the MTTase N-terminal domain; sequence KKVYVKTFGC…LPQMIDARRE (118 aa). [4Fe-4S] cluster contacts are provided by cysteine 12, cysteine 49, cysteine 83, cysteine 157, cysteine 161, and cysteine 164. Residues 143–377 enclose the Radical SAM core domain; sequence RVEGPSAFVS…QATIEENVAR (235 aa). The region spanning 380-447 is the TRAM domain; sequence QSMLGKVERI…PHSLRGELVL (68 aa).

This sequence belongs to the methylthiotransferase family. MiaB subfamily. In terms of assembly, monomer. It depends on [4Fe-4S] cluster as a cofactor.

It localises to the cytoplasm. It catalyses the reaction N(6)-dimethylallyladenosine(37) in tRNA + (sulfur carrier)-SH + AH2 + 2 S-adenosyl-L-methionine = 2-methylsulfanyl-N(6)-dimethylallyladenosine(37) in tRNA + (sulfur carrier)-H + 5'-deoxyadenosine + L-methionine + A + S-adenosyl-L-homocysteine + 2 H(+). Catalyzes the methylthiolation of N6-(dimethylallyl)adenosine (i(6)A), leading to the formation of 2-methylthio-N6-(dimethylallyl)adenosine (ms(2)i(6)A) at position 37 in tRNAs that read codons beginning with uridine. The chain is tRNA-2-methylthio-N(6)-dimethylallyladenosine synthase from Burkholderia thailandensis (strain ATCC 700388 / DSM 13276 / CCUG 48851 / CIP 106301 / E264).